The following is a 227-amino-acid chain: UPF0441 protein YPO0661/y3517/YP_2976 (227 aa).

The disordered stretch occupies residues 198-227; the sequence is GGFGESVAKQSSMQRSAATSSKTTTRSMGG. Low complexity predominate over residues 212–227; sequence RSAATSSKTTTRSMGG.

This sequence belongs to the UPF0441 family.

The protein is UPF0441 protein YPO0661/y3517/YP_2976 of Yersinia pestis.